The sequence spans 83 residues: Transmembrane protein EP84R (83 aa).

The next 2 membrane-spanning stretches (helical) occupy residues 31 to 51 (IIGV…IIIL) and 59 to 79 (TGSI…FLIY).

Belongs to the asfivirus EP84R family.

It is found in the virion membrane. The polypeptide is Transmembrane protein EP84R (Ornithodoros (relapsing fever ticks)).